Here is a 179-residue protein sequence, read N- to C-terminus: UPF0167 protein PA1536 (179 aa).

This sequence belongs to the UPF0167 family.

In Pseudomonas aeruginosa (strain ATCC 15692 / DSM 22644 / CIP 104116 / JCM 14847 / LMG 12228 / 1C / PRS 101 / PAO1), this protein is UPF0167 protein PA1536.